The primary structure comprises 201 residues: Probable nicotinate-nucleotide adenylyltransferase (201 aa).

It belongs to the NadD family.

It carries out the reaction nicotinate beta-D-ribonucleotide + ATP + H(+) = deamido-NAD(+) + diphosphate. It functions in the pathway cofactor biosynthesis; NAD(+) biosynthesis; deamido-NAD(+) from nicotinate D-ribonucleotide: step 1/1. Catalyzes the reversible adenylation of nicotinate mononucleotide (NaMN) to nicotinic acid adenine dinucleotide (NaAD). The protein is Probable nicotinate-nucleotide adenylyltransferase of Neisseria meningitidis serogroup C / serotype 2a (strain ATCC 700532 / DSM 15464 / FAM18).